The sequence spans 254 residues: 4-hydroxy-tetrahydrodipicolinate reductase (254 aa).

NAD(+) contacts are provided by residues 10-15 (GATGKV) and 101-103 (GTT). The active-site Proton donor/acceptor is H157. H158 lines the (S)-2,3,4,5-tetrahydrodipicolinate pocket. K161 acts as the Proton donor in catalysis. Residue 167 to 168 (GT) participates in (S)-2,3,4,5-tetrahydrodipicolinate binding.

It belongs to the DapB family.

It localises to the cytoplasm. It catalyses the reaction (S)-2,3,4,5-tetrahydrodipicolinate + NAD(+) + H2O = (2S,4S)-4-hydroxy-2,3,4,5-tetrahydrodipicolinate + NADH + H(+). It carries out the reaction (S)-2,3,4,5-tetrahydrodipicolinate + NADP(+) + H2O = (2S,4S)-4-hydroxy-2,3,4,5-tetrahydrodipicolinate + NADPH + H(+). It functions in the pathway amino-acid biosynthesis; L-lysine biosynthesis via DAP pathway; (S)-tetrahydrodipicolinate from L-aspartate: step 4/4. Its function is as follows. Catalyzes the conversion of 4-hydroxy-tetrahydrodipicolinate (HTPA) to tetrahydrodipicolinate. The chain is 4-hydroxy-tetrahydrodipicolinate reductase from Symbiobacterium thermophilum (strain DSM 24528 / JCM 14929 / IAM 14863 / T).